A 250-amino-acid chain; its full sequence is uncharacterized protein (250 aa).

The region spanning 7 to 244 is the ABC transporter domain; that stretch reads LKVEDLHVYR…YKKECGKCYK (238 aa). 39–46 contributes to the ATP binding site; sequence GPNGAGKS.

The protein belongs to the ABC transporter superfamily.

This is an uncharacterized protein from Methanocaldococcus jannaschii (strain ATCC 43067 / DSM 2661 / JAL-1 / JCM 10045 / NBRC 100440) (Methanococcus jannaschii).